A 220-amino-acid chain; its full sequence is MTISLMIEKKCERSFFSMNAIIHGIVLAFGLILPLGVQNVFIFQQGALQKHIWRALPAVISASVCDTLLIVLAVAGVSVIVQELPVFETVMMAGGFLFLLYMGWVTWNIRPNTSQNEKHTFTPKKQAAFAAAVSLLNPHAILDTIGVIGTSSLQYSGLEKWLFMAACIAVSWIWFISLAIAGRLFQTIDTSGRLMLIVNKCSAAVMWAAAGYFGVSLFCN.

A run of 6 helical transmembrane segments spans residues 15–35 (FFSM…ILPL), 67–87 (TLLI…LPVF), 89–109 (TVMM…TWNI), 128–148 (AFAA…IGVI), 161–181 (WLFM…LAIA), and 195–215 (MLIV…YFGV).

Belongs to the LysE/ArgO transporter (TC 2.A.75) family.

The protein resides in the cell membrane. This chain is Putative amino-acid transporter YisU (yisU), found in Bacillus subtilis (strain 168).